A 356-amino-acid polypeptide reads, in one-letter code: Histidinol-phosphate aminotransferase (356 aa).

Position 214 is an N6-(pyridoxal phosphate)lysine (Lys214).

This sequence belongs to the class-II pyridoxal-phosphate-dependent aminotransferase family. Histidinol-phosphate aminotransferase subfamily. In terms of assembly, homodimer. Requires pyridoxal 5'-phosphate as cofactor.

The catalysed reaction is L-histidinol phosphate + 2-oxoglutarate = 3-(imidazol-4-yl)-2-oxopropyl phosphate + L-glutamate. The protein operates within amino-acid biosynthesis; L-histidine biosynthesis; L-histidine from 5-phospho-alpha-D-ribose 1-diphosphate: step 7/9. This Escherichia coli O1:K1 / APEC protein is Histidinol-phosphate aminotransferase.